A 91-amino-acid polypeptide reads, in one-letter code: uncharacterized protein (91 aa).

The tract at residues 71–91 (EANDRPSKKCGSGNLRVEKLV) is disordered.

This is an uncharacterized protein from Archaeoglobus fulgidus (strain ATCC 49558 / DSM 4304 / JCM 9628 / NBRC 100126 / VC-16).